Reading from the N-terminus, the 1912-residue chain is MGNGYFRTSQTSSSSRQREKRGKDSYSYQHNYVDRVRLEDTTGGHYHNNQHQQTTHDPRCPQLRAAGWRHTHKSVSHLDLATSCHDAAGTGLGRHSQQLHHHHSNQVNQHHHQQQQSHHHLQHANLHSHHPHAQPHWTQCRVGGAGSGNGQLRNARSLDYTQLEREENALDIAEFYWRFDAEAPLDQVDSYAVLPINDNFEPSAATSTAVGSKETTTTVANKANGSATTNATTAAANALLDILGSESCSLRRSRSLAVIREETFSDLQIGSANSSRRRSQLIPRARLVNRGFFRESPRSRHKFQFKQFKKKPPAKLLRLNGKPNQATLVGEQPADQPTADDTQSQRSNSATCDSHQQQQQQQHQPQQQHQQQQHRLSGESRDFDVYYDNLKRLDALALNLSEQLHPWHNDKSDLESLNSDYFKNSLHQNHLDQQQPSSLEFEALEQVAASLLKERPRIYQSRRQQQKRNNHHSNCLQRHLDTGGESCPEHSQSSVFPETTTSNSDDQTDSPSLSEQEYDLTHIEEIYQQGNNGEESYEIISLTTTTRTRFESSEEGEEEQTGEEVVDSLTTPTEPQTSDSESTLRQNHNEQLDKLIAYDSVYLSSEDSSDCTLVGESCESFEQRTFTSCGESGELETRSLLHISIEDTVYEPQAKQHKKATNQEDQPAPLLTTTAKVEAQIFTQVLKVEHTPKPNILAVVEKRKLKQEEVKHQPPELKRQATDSFVVTANKSNLAENQYHSLPDVNIGVSLKVCESIDKELRSSYNQQRQQQRKEAKKEQQVTRAETYDSIRRFGRAHQKARQREYQEREREREKEASAALQEKDKEREREKPKINKEFSAQERQIEVKETTKSQDIIKEKEQVSRKEEAEDDEEEEPLPPPPPPLTEESQQEDTVADVEEEDNLSVSISQPEQPKEAPVIEVANFSKLIERRAQEIRERQEQIKPSFQIIVTDAQNNIIQKEAIQENKETSQRIEPKPSPKTNSNSSSTCNLVQRPLRRSVSSSSGKPLEHRILSTGAPIYKARPVRVLPSSSSDSSFSRGKMSRPQILHVVDGRGGVAGGGAGGTLRRRSSARSIASTISSPGGEVANEYLQKVDAVRCYWNKLAGNEPETLKTEQPAKETQPGIHFQLGGETTTQGTDKSAVGNDFCSMMPHPSIEIVELGEGAQKATIVKAAPEREEDPDEDQDQFDHIRYKVLKSQQLIRNNFLSTRNKKEAQFDGLIQYLQEYSFQELLSNNNVVIVEPVRTKIERPLQVGINSGSTTTPTTVPPPKPPRVVNASASQPRKTRQKQTGGAAAKRHFFYQPVRVNRELYEDELPDPDTVRNVRRFFEQNVLPTPGQGLLVQSQQKFGGSACQLSPKSRRARGYRYLTIDTSYGGAEEQPKGMEMLEEHKAKHWDNASLSSGISSGVLSSPCGEYHHQESPVMACKDVHVQDVVRRHNSNAANAKARAKFASRRTWCMGAGGPGANESLYRQIYENNLGNSEQQENGEHLEEEDDEQDDQYEDDVEQDMCENYYVSNDVLAKIRECGSTVTYYGGRVLDKTATSTAAPSTKTTQPMTGSATRSRIRQIEACNVCLPSERCEHRLQTKQAAAKQQQDSYQGIKFKLVKSNSCSSRLELAGTGEDEVTADSEVVRKMVHHFEANQTTASNDVQVTINSQSQITSTKKEPEEDVPRRQVTVNNHINVLGDTMPQASQEKAENFNGRPEENGYGAVETVPTYESQAMNIRLDATENKNILQTAAATAAANKVCRNKNVDLAYTLVKTTTNSPKGKPIEAPRQKIGKQLREVEENVEKAAVTKATIKLTKGAPSQIIVPVDIHSQASIVAHTAPIPERRLSNASSSNSVVDKTVVRHYVANDKSIYERRKYDEIEFEEFEVYDPSKEPPPQVEEGTDKIPTDAELYDSLDDKM.

10 disordered regions span residues 1 to 32 (MGNGYFRTSQTSSSSRQREKRGKDSYSYQHNY), 89 to 145 (GTGL…VGGA), 298 to 377 (RSRH…HRLS), 460 to 515 (QSRR…SLSE), 545 to 586 (TTRT…TLRQ), 764 to 920 (SYNQ…EAPV), 965 to 1010 (IQEN…GKPL), 1257 to 1297 (GINS…GGAA), 1486 to 1507 (EQQENGEHLEEEDDEQDDQYED), and 1881 to 1912 (YDPSKEPPPQVEEGTDKIPTDAELYDSLDDKM). 2 stretches are compositionally biased toward basic residues: residues 97–133 (QQLHHHHSNQVNQHHHQQQQSHHHLQHANLHSHHPHA) and 299–313 (SRHKFQFKQFKKKPP). The span at 339-354 (ADDTQSQRSNSATCDS) shows a compositional bias: polar residues. Low complexity predominate over residues 355-374 (HQQQQQQQHQPQQQHQQQQH). A compositionally biased stretch (polar residues) spans 489-498 (EHSQSSVFPE). Residues 499–512 (TTTSNSDDQTDSPS) show a composition bias toward low complexity. Acidic residues predominate over residues 553-566 (SEEGEEEQTGEEVV). Positions 568–586 (SLTTPTEPQTSDSESTLRQ) are enriched in polar residues. 2 stretches are compositionally biased toward basic and acidic residues: residues 772–792 (QRKEAKKEQQVTRAETYDSIR) and 802–869 (RQRE…RKEE). Residues 890–904 (SQQEDTVADVEEEDN) are compositionally biased toward acidic residues. The segment covering 965–979 (IQENKETSQRIEPKP) has biased composition (basic and acidic residues). Low complexity predominate over residues 981 to 990 (PKTNSNSSST). Acidic residues-rich tracts occupy residues 1494-1507 (LEEEDDEQDDQYED) and 1903-1912 (ELYDSLDDKM).

The protein localises to the cytoplasm. It localises to the cytoskeleton. In terms of biological role, important for normal assembly of actin bundles during bristle formation. The chain is Protein javelin from Drosophila melanogaster (Fruit fly).